The sequence spans 282 residues: Bifunctional protein FolD (282 aa).

NADP(+)-binding positions include 162–164 (GRS), Ser187, and Val228.

Belongs to the tetrahydrofolate dehydrogenase/cyclohydrolase family. As to quaternary structure, homodimer.

The catalysed reaction is (6R)-5,10-methylene-5,6,7,8-tetrahydrofolate + NADP(+) = (6R)-5,10-methenyltetrahydrofolate + NADPH. It carries out the reaction (6R)-5,10-methenyltetrahydrofolate + H2O = (6R)-10-formyltetrahydrofolate + H(+). Its pathway is one-carbon metabolism; tetrahydrofolate interconversion. Functionally, catalyzes the oxidation of 5,10-methylenetetrahydrofolate to 5,10-methenyltetrahydrofolate and then the hydrolysis of 5,10-methenyltetrahydrofolate to 10-formyltetrahydrofolate. In Thermus thermophilus (strain ATCC BAA-163 / DSM 7039 / HB27), this protein is Bifunctional protein FolD.